The following is a 222-amino-acid chain: GEM-like protein 4 (222 aa).

One can recognise a GRAM domain in the interval 95-173 (KIFKRLFRVS…CKIDRVNQSQ (79 aa)).

This sequence belongs to the GEM family.

The sequence is that of GEM-like protein 4 from Arabidopsis thaliana (Mouse-ear cress).